Consider the following 381-residue polypeptide: MSPPAGGAAAAADPASPVVLLAVQAAVRLLGAGHEDEAQLRKLQLKADPERPGRFRLGLLGIEPGAVSLEWPLESICYTIRGPNQHELQPPPGGPGTFSVHFLNSEEAQQWAALVRDATAEGQNGNDSTAPVPTPAMCPTSPPCSSVTPTPKATQPEMDLPQGSGNLKKEELATHLAQAIAGGDEKAAAQVAAILAQHHVALNVQLLEAWFPRGPIRLQVTVEDATSVLSSSSSAHVSLQIHPHCSIAALQEQVFSEFGFPPAVQRWVIGRCLCMPERSLASYGVSQDGDPAFLYLLSAPREVSGHSPQHSKMDRKLGCLFPQSLELPHNLQASSSSLPSPPQPGWSCPSCTFINASNRPGCEMCSTQRPCAWDPLTATST.

The segment at 1 to 177 (MSPPAGGAAA…KKEELATHLA (177 aa)) is self-association. The segment covering 121 to 131 (EGQNGNDSTAP) has biased composition (polar residues). The tract at residues 121-153 (EGQNGNDSTAPVPTPAMCPTSPPCSSVTPTPKA) is disordered. A compositionally biased stretch (pro residues) spans 132 to 142 (VPTPAMCPTSP). Residues 172–305 (LATHLAQAIA…LLSAPREVSG (134 aa)) form an interaction with SHANK1 region. The region spanning 216–285 (IRLQVTVEDA…PERSLASYGV (70 aa)) is the Ubiquitin-like domain. A Phosphoserine modification is found at Ser-307. The RanBP2-type zinc-finger motif lies at 342-371 (PQPGWSCPSCTFINASNRPGCEMCSTQRPC).

As to quaternary structure, monomer and homodimer. Component of the LUBAC complex (linear ubiquitin chain assembly complex) which consists of SHARPIN, RBCK1 and RNF31. LUBAC has a MW of approximately 600 kDa suggesting a heteromultimeric assembly of its subunits. Associates with the TNF-R1 signaling complex (TNF-RSC) in a stimulation-dependent manner. Interacts with EYA1, EYA2, SHANK1 and SHANK3 (via ANK repeats). Expressed in brain, spleen, lung, heart, skeletal muscle, kidney and testis (at protein level). Expressed in heart and testis.

The protein localises to the cytoplasm. It localises to the synapse. It participates in protein modification; protein ubiquitination. Component of the LUBAC complex which conjugates linear polyubiquitin chains in a head-to-tail manner to substrates and plays a key role in NF-kappa-B activation and regulation of inflammation. LUBAC conjugates linear polyubiquitin to IKBKG and RIPK1 and is involved in activation of the canonical NF-kappa-B and the JNK signaling pathways. Linear ubiquitination mediated by the LUBAC complex interferes with TNF-induced cell death and thereby prevents inflammation. LUBAC is recruited to the TNF-R1 signaling complex (TNF-RSC) following polyubiquitination of TNF-RSC components by BIRC2 and/or BIRC3 and to conjugate linear polyubiquitin to IKBKG and possibly other components contributing to the stability of the complex. The LUBAC complex is also involved in innate immunity by conjugating linear polyubiquitin chains at the surface of bacteria invading the cytosol to form the ubiquitin coat surrounding bacteria. LUBAC is not able to initiate formation of the bacterial ubiquitin coat, and can only promote formation of linear polyubiquitins on pre-existing ubiquitin. The bacterial ubiquitin coat acts as an 'eat-me' signal for xenophagy and promotes NF-kappa-B activation. Together with OTULIN, the LUBAC complex regulates the canonical Wnt signaling during angiogenesis. This chain is Sharpin (Sharpin), found in Rattus norvegicus (Rat).